The primary structure comprises 1773 residues: ATP-binding cassette sub-family A member 17 (1773 aa).

3 helical membrane-spanning segments follow: residues 22–42 (TLVTVLETLMPVLFSAIVLYL), 262–282 (FPLLLMLSFICVELIITNSIL), and 306–326 (AWFITFFLSALVTVSGMTVLF). An N-linked (GlcNAc...) asparagine glycan is attached at Asn-340. The next 4 helical transmembrane spans lie at 342-362 (TLIFIFLMCFAIATIFFAFMM), 372-392 (GTVIGGIVFFFTYLPYMYITF), 403-423 (ILSCLFSNVAMAMGVRFISLF), and 444-464 (FTQVLVMLLLDSFLYCLVAFL). An ABC transporter 1 domain is found at 525–758 (IEIQHLYKVF…YGAGYYMTII (234 aa)). 561–568 (GHNGAGKT) contributes to the ATP binding site. Residue Asn-615 is glycosylated (N-linked (GlcNAc...) asparagine). A run of 7 helical transmembrane segments spans residues 912–932 (LVLSVQILLPLVIIMLSLSFF), 1088–1108 (LVVNFLFGIAFLSSSFSILTV), 1134–1154 (LLWDLISFLVPTLLLVLVFFW), 1166–1186 (IPAVVLIMMLYGWAIIPLVYT), 1198–1218 (CVKLVAMLTFLSISPVVLVTV), 1236–1256 (IFLIFPGHCLGMAFSNLYYNF), and 1293–1313 (IGKYLTALAILGPVYITLLFL). N-linked (GlcNAc...) asparagine glycosylation occurs at Asn-1340. The ABC transporter 2 domain occupies 1369 to 1602 (LVVKELSKVY…FGSGYSLQAK (234 aa)). Residue 1404 to 1411 (GLNGAGKT) coordinates ATP. Residues 1690–1773 (NIQQGQAALD…SQPPSEPVLL (84 aa)) form a disordered region. Low complexity predominate over residues 1700–1710 (SSLSPSNSRPI). Pro residues-rich tracts occupy residues 1711–1740 (SSPPSSPPSSPPSSPPSRPPSRPSQPPSRP) and 1763–1773 (PSQPPSEPVLL).

This sequence belongs to the ABC transporter superfamily. ABCA family. Post-translationally, N-glycosylated.

It is found in the endoplasmic reticulum membrane. The protein resides in the cytoplasm. The enzyme catalyses cholesterol(in) + ATP + H2O = cholesterol(out) + ADP + phosphate + H(+). In terms of biological role, promotes cholesterol efflux from sperm which renders sperm capable of fertilization. Has also been shown to decrease levels of intracellular esterified neutral lipids including cholesteryl esters, fatty acid esters and triacylglycerols. This chain is ATP-binding cassette sub-family A member 17, found in Rattus norvegicus (Rat).